A 117-amino-acid polypeptide reads, in one-letter code: Probable non-functional immunoglobulin kappa variable 1D-42 (117 aa).

An N-terminal signal peptide occupies residues 1 to 22 (MDMRVPAQLLGLLLLWLPGVRF). A framework-1 region spans residues 23-45 (DIQMTQSPSFLSASVGDRVSIIC). Residues 23–117 (DIQMTQSPSF…YYCKQDFSYP (95 aa)) enclose the Ig-like domain. An intrachain disulfide couples cysteine 45 to cysteine 110. Positions 46 to 56 (WASEGISSNLA) are complementarity-determining-1. Residues 57 to 71 (WYLQKPGKSPKLFLY) form a framework-2 region. Residues 72–78 (DAKDLHP) form a complementarity-determining-2 region. Residues 79 to 110 (GVSSRFSGRGSGTDFTLTIISLKPEDFAAYYC) are framework-3. The tract at residues 111-117 (KQDFSYP) is complementarity-determining-3.

As to quaternary structure, immunoglobulins are composed of two identical heavy chains and two identical light chains; disulfide-linked.

It is found in the secreted. The protein localises to the cell membrane. Its function is as follows. Probable non-functional open reading frame (ORF) of V region of the variable domain of immunoglobulin light chains. Non-functional ORF generally cannot participate in the synthesis of a productive immunoglobulin chain due to altered V-(D)-J or switch recombination and/or splicing site (at mRNA level) and/or conserved amino acid change (protein level). Immunoglobulins, also known as antibodies, are membrane-bound or secreted glycoproteins produced by B lymphocytes. In the recognition phase of humoral immunity, the membrane-bound immunoglobulins serve as receptors which, upon binding of a specific antigen, trigger the clonal expansion and differentiation of B lymphocytes into immunoglobulins-secreting plasma cells. Secreted immunoglobulins mediate the effector phase of humoral immunity, which results in the elimination of bound antigens. The antigen binding site is formed by the variable domain of one heavy chain, together with that of its associated light chain. Thus, each immunoglobulin has two antigen binding sites with remarkable affinity for a particular antigen. The variable domains are assembled by a process called V-(D)-J rearrangement and can then be subjected to somatic hypermutations which, after exposure to antigen and selection, allow affinity maturation for a particular antigen. This chain is Probable non-functional immunoglobulin kappa variable 1D-42, found in Homo sapiens (Human).